The following is a 357-amino-acid chain: Naringenin,2-oxoglutarate 3-dioxygenase (357 aa).

The Fe2OG dioxygenase domain occupies 189-293 (CVDMDQKIVV…RLSIATFQNP (105 aa)). 3 residues coordinate Fe cation: His-216, Asp-218, and His-274. Arg-284 is a binding site for 2-oxoglutarate.

The protein belongs to the iron/ascorbate-dependent oxidoreductase family. It depends on Fe(2+) as a cofactor. Requires L-ascorbate as cofactor.

The enzyme catalyses a (2S)-flavan-4-one + 2-oxoglutarate + O2 = a (2R,3R)-dihydroflavonol + succinate + CO2. It functions in the pathway secondary metabolite biosynthesis; flavonoid biosynthesis. Its function is as follows. Catalyzes the 3-beta-hydroxylation of 2S-flavanones to 2R,3R-dihydroflavonols which are intermediates in the biosynthesis of flavonols, anthocyanidins, catechins and proanthocyanidins in plants. In Matthiola incana (Common stock), this protein is Naringenin,2-oxoglutarate 3-dioxygenase (FHT).